We begin with the raw amino-acid sequence, 354 residues long: Divinyl chlorophyll a/b light-harvesting protein PcbG (354 aa).

6 helical membrane passes run 27–47 (FIAA…ASTL), 65–85 (IFLA…VWTG), 88–108 (VASV…GALS), 201–221 (VLGG…FHIA), 241–261 (AVLS…AFWC), and 308–328 (LTNV…WHAI).

This sequence belongs to the PsbB/PsbC family. IsiA/Pcb subfamily. The antenna complex consists of divinyl chlorophylls (a and b) and divinyl chlorophyll a/b binding proteins and binds more divinyl chlorophyll b than does the antenna complex from high-light-adapted Prochlorococcus. Divinyl chlorophyll a is required as a cofactor. The cofactor is divinyl chlorophyll b.

It is found in the cellular thylakoid membrane. Its function is as follows. The antenna complex functions as a light receptor, it captures and delivers excitation energy to photosystems II and I. The Prochlorales pcb genes are not related to higher plant LHCs. This is Divinyl chlorophyll a/b light-harvesting protein PcbG (pcbG) from Prochlorococcus marinus (strain NATL2A).